A 109-amino-acid chain; its full sequence is Cell division protein FtsL (109 aa).

At methionine 1–arginine 3 the chain is on the cytoplasmic side. Residues leucine 4 to asparagine 21 form a helical membrane-spanning segment. The Periplasmic segment spans residues serine 22–arginine 109.

Belongs to the FtsL family. In terms of assembly, part of a complex composed of FtsB, FtsL and FtsQ.

The protein resides in the cell inner membrane. Essential cell division protein. May link together the upstream cell division proteins, which are predominantly cytoplasmic, with the downstream cell division proteins, which are predominantly periplasmic. In Burkholderia pseudomallei (strain K96243), this protein is Cell division protein FtsL.